The sequence spans 1054 residues: Desmoglein-1 (1054 aa).

Residues 1 to 23 (MNWHFLRTATVLLIFLVVVEINS) form the signal peptide. A propeptide spanning residues 24 to 49 (EFRIQVRDYNTKNGTIKWHSIRRQKR) is cleaved from the precursor. Asn-36, Asn-110, and Asn-180 each carry an N-linked (GlcNAc...) asparagine glycan. 4 consecutive Cadherin domains span residues 50-157 (EWIK…PPVF), 158-269 (SMST…IPYM), 270-389 (EPSS…RPGS), and 386-493 (RPGS…KDSE). Residues 50–566 (EWIKFAAACR…NLSDNVHFGP (517 aa)) are Extracellular-facing. A disordered region spans residues 487–554 (GWEKDSEKVT…QSNNNHQELG (68 aa)). Low complexity predominate over residues 496 to 507 (TSSQNSGSSTGD). The segment covering 508-517 (SSGGTGGGGR) has biased composition (gly residues). The segment covering 523 to 534 (GDTTTNTGGKTS) has biased composition (low complexity). The segment covering 542–554 (TQTQSNNNHQELG) has biased composition (polar residues). Asn-557 carries an N-linked (GlcNAc...) asparagine glycan. Residues 567-587 (AGIGLLIMGFLVLGLVPFLLM) form a helical membrane-spanning segment. At 588–1054 (CCDCGGAPGA…TKYSTVQYTK (467 aa)) the chain is on the cytoplasmic side. Desmoglein repeat repeat units follow at residues 830–856 (TYPS…TVTE), 857–886 (SYTT…ERVV), 887–916 (GPIS…ERVI), 917–944 (APSS…ERVI), and 945–973 (RPAS…ERVV). Positions 1018–1040 (GHVRSSSDHHFSQTLGSASPSTA) are disordered. Positions 1029-1040 (SQTLGSASPSTA) are enriched in polar residues.

Binds to JUP/plakoglobin. Interacts with PKP2. Interacts with DSC3; there is evidence to suggest that the interaction promotes cell-cell adhesion of keratinocytes.

It localises to the cell membrane. Its subcellular location is the cell junction. The protein localises to the desmosome. The protein resides in the cytoplasm. It is found in the nucleus. Its function is as follows. Component of intercellular desmosome junctions. Involved in the interaction of plaque proteins and intermediate filaments mediating cell-cell adhesion. This chain is Desmoglein-1 (DSG1), found in Canis lupus familiaris (Dog).